The sequence spans 260 residues: Myb transcription factor 42 (260 aa).

2 consecutive HTH myb-type domains span residues 9-61 (KAHT…INYL) and 62-116 (RPDL…RRKL). 2 DNA-binding regions (H-T-H motif) span residues 37–61 (WRSL…INYL) and 89–112 (WSLI…NTHI).

Mainly expressed in the aerial parts and, to a lower extent, in roots.

It localises to the nucleus. Functionally, transcription factor that negatively regulates the expression of caffeic acid O-methyl-transferase genes (COMTs) and of other genes involved in the biosynthesis of lignin, thus preventing lignification. The sequence is that of Myb transcription factor 42 from Zea mays (Maize).